We begin with the raw amino-acid sequence, 240 residues long: MKRPSGRAADQLRSIRITRNYTKHAEGSVLVEFGDTKVICTVSVENGVPRFLKGQGQGWLTAEYGMLPRSTGERNQREASRGKQGGRTLEIQRLIGRSLRAALDMSKLGDITLYVDCDVIQADGGTRTASITGAMVALCDALAVIKKRGGLKAGNPLKHMIAAVSVGMYQGEAVLDLDYPEDSAAETDLNVVMTSAGGFIEVQGTAEGAPFQPEDFNAMLALAQKGMNEIFELQQAALAD.

Phosphate is bound by residues Arg-87 and 125–127; that span reads GTR.

This sequence belongs to the RNase PH family. As to quaternary structure, homohexameric ring arranged as a trimer of dimers.

The catalysed reaction is tRNA(n+1) + phosphate = tRNA(n) + a ribonucleoside 5'-diphosphate. In terms of biological role, phosphorolytic 3'-5' exoribonuclease that plays an important role in tRNA 3'-end maturation. Removes nucleotide residues following the 3'-CCA terminus of tRNAs; can also add nucleotides to the ends of RNA molecules by using nucleoside diphosphates as substrates, but this may not be physiologically important. Probably plays a role in initiation of 16S rRNA degradation (leading to ribosome degradation) during starvation. This Pseudomonas putida (strain GB-1) protein is Ribonuclease PH.